Consider the following 256-residue polypeptide: MVTLDTQSIIRTVNVNFYYGRFQALTDITMDFQKNRVTALIGPSGCGKSTLLRLLNRMNDLIDGCRVEGQVLFEDQNIYAPEMDPVEVRRRIGMVFQKPNPFPKTIFDNIAYGPRLHGFRKRSDLEALVESSLQQAVLWEEVKDILPRSAMTLSGGQQQRLCIARALAMKPDVLLMDEPTSALDPISTAKIEELIDELKENYTIIIVTHNMQQAARVSGMTGFFYLGKLIEYNATEKIFTNPEQKQTEDYITGRFG.

The 242-residue stretch at 10-251 folds into the ABC transporter domain; the sequence is IRTVNVNFYY…PEQKQTEDYI (242 aa). 42 to 49 is a binding site for ATP; that stretch reads GPSGCGKS.

The protein belongs to the ABC transporter superfamily. Phosphate importer (TC 3.A.1.7) family. As to quaternary structure, the complex is composed of two ATP-binding proteins (PstB), two transmembrane proteins (PstC and PstA) and a solute-binding protein (PstS).

It localises to the cell inner membrane. The catalysed reaction is phosphate(out) + ATP + H2O = ADP + 2 phosphate(in) + H(+). Its function is as follows. Part of the ABC transporter complex PstSACB involved in phosphate import. Responsible for energy coupling to the transport system. This Syntrophus aciditrophicus (strain SB) protein is Phosphate import ATP-binding protein PstB.